Consider the following 379-residue polypeptide: Centrosomal protein 43 (379 aa).

The 33-residue stretch at 70 to 102 (DGRLVASLVAEFLQFFNLDFTLAVFQPETSTLQ) folds into the LisH domain. The segment at 139-196 (EKGPTTGEGALDLSDVHPPPKSPEGKTSAQTTPSKKANNEANQSDTSVSLSEPKSKSS) is disordered. Residue Thr-143 is modified to Phosphothreonine. Ser-152 and Ser-160 each carry phosphoserine. Residues 163-184 (GKTSAQTTPSKKANNEANQSDT) show a composition bias toward polar residues. Position 170 is a phosphothreonine (Thr-170). Ser-182 carries the phosphoserine modification. The segment covering 185–196 (SVSLSEPKSKSS) has biased composition (low complexity). Position 214 is a phosphothreonine (Thr-214). A disordered region spans residues 216–288 (DGKDKAGLCP…APSLKDSESK (73 aa)). Acidic residues predominate over residues 225–236 (PDEDDMEGDSFF). The segment covering 239–255 (PIPKPEKTYGLRSEPRK) has biased composition (basic and acidic residues). Positions 266–282 (APPLKSGLSSLAGAPSL) are enriched in low complexity. A phosphoserine mark is found at Ser-281 and Ser-306. A Phosphotyrosine modification is found at Tyr-317.

Belongs to the CEP43 family. Homodimer. Part of a ternary complex that contains CEP350, CEP43 and MAPRE1. Interacts directly with CEP350 and MAPRE1. Interacts with CEP19. Interacts (via N-terminus) with CEP350 (via C-terminus).

The protein resides in the cytoplasm. It is found in the cytoskeleton. The protein localises to the microtubule organizing center. Its subcellular location is the centrosome. It localises to the centriole. The protein resides in the cilium basal body. Required for anchoring microtubules to the centrosomes. Required for ciliation. This chain is Centrosomal protein 43 (CEP43), found in Macaca fascicularis (Crab-eating macaque).